Consider the following 434-residue polypeptide: MAQFYSAKRRVTTRQIITVTVNDLDPFGQGVARHQGKALFVSGVLPQEQAEVVLVEDKKQYARAQVKRRLTDSPQRQAPRCPHFGVCGGCQQQHASVALQQQSKRAALARLMKREVDEVIAGVPWGYRRRARLSLNYQPKTQQLQMGFRQANAKAIVDVVQCPVLAPQLEALLPAVRECLSALSALRHLGHVELVQADNGPLMVLRHTAALPAGDREKLERFSQTHGLSLYLAPQSEILEHIHGEAPWYTSDGLRLVFSPRDFIQVNDGVNQQMVRTALEWLDLQPEDRVLDLFCGMGNFTLPLATRAAHVVGVEGVPALVEKGRENAALNGLSNVTFFHENLEEDVTRQAWAKHGFDKVLLDPARAGAPGVMPHIIKLAPRRVVYVSCNPATLARDSETLLQAGYQIQRLAMLDMFPHTGHLESMVLFERRLT.

Residues 10–68 enclose the TRAM domain; that stretch reads RVTTRQIITVTVNDLDPFGQGVARHQGKALFVSGVLPQEQAEVVLVEDKKQYARAQVKR. Residues C81, C87, C90, and C162 each contribute to the [4Fe-4S] cluster site. 6 residues coordinate S-adenosyl-L-methionine: Q265, F294, N299, E315, N342, and D363. The active-site Nucleophile is the C389.

Belongs to the class I-like SAM-binding methyltransferase superfamily. RNA M5U methyltransferase family. RlmD subfamily.

It catalyses the reaction uridine(1939) in 23S rRNA + S-adenosyl-L-methionine = 5-methyluridine(1939) in 23S rRNA + S-adenosyl-L-homocysteine + H(+). Catalyzes the formation of 5-methyl-uridine at position 1939 (m5U1939) in 23S rRNA. This is 23S rRNA (uracil(1939)-C(5))-methyltransferase RlmD from Klebsiella pneumoniae (strain 342).